The chain runs to 305 residues: Oxygen-dependent coproporphyrinogen-III oxidase (305 aa).

Serine 98 is a binding site for substrate. 2 residues coordinate a divalent metal cation: histidine 102 and histidine 112. Histidine 112 functions as the Proton donor in the catalytic mechanism. A substrate-binding site is contributed by 114–116 (NVR). The a divalent metal cation site is built by histidine 151 and histidine 181. An important for dimerization region spans residues 246–281 (YVEFNLVYDRGTLFGLQSGGRTESILMSMPPLARWE). Residue 264–266 (GGR) coordinates substrate.

It belongs to the aerobic coproporphyrinogen-III oxidase family. Homodimer. It depends on a divalent metal cation as a cofactor.

It localises to the cytoplasm. It catalyses the reaction coproporphyrinogen III + O2 + 2 H(+) = protoporphyrinogen IX + 2 CO2 + 2 H2O. Its pathway is porphyrin-containing compound metabolism; protoporphyrin-IX biosynthesis; protoporphyrinogen-IX from coproporphyrinogen-III (O2 route): step 1/1. Functionally, involved in the heme biosynthesis. Catalyzes the aerobic oxidative decarboxylation of propionate groups of rings A and B of coproporphyrinogen-III to yield the vinyl groups in protoporphyrinogen-IX. This chain is Oxygen-dependent coproporphyrinogen-III oxidase, found in Vibrio vulnificus (strain CMCP6).